Reading from the N-terminus, the 272-residue chain is Protein alcS (272 aa).

Residues 1–14 are compositionally biased toward polar residues; it reads MDTEQGLKNHTAKT. The tract at residues 1–21 is disordered; that stretch reads MDTEQGLKNHTAKTSPHDETA. Helical transmembrane passes span 63–83, 91–111, 122–144, 164–184, 192–212, and 225–245; these read PLAL…LMGW, IAFT…TSIL, VVFG…AFNA, FLNT…IFLA, VYVA…GAYW, and LVVA…YLLV.

Belongs to the acetate uptake transporter (AceTr) (TC 2.A.96) family.

The protein localises to the cell membrane. The protein resides in the cell septum. This chain is Protein alcS, found in Aspergillus fumigatus (strain CBS 144.89 / FGSC A1163 / CEA10) (Neosartorya fumigata).